Consider the following 234-residue polypeptide: Sugar fermentation stimulation protein A (234 aa).

The H-T-H motif DNA-binding region spans 201–220 (LLSEAQQRGVEILAYKAEIS).

It belongs to the SfsA family.

In terms of biological role, binds to DNA non-specifically. Could be a regulatory factor involved in maltose metabolism. This is Sugar fermentation stimulation protein A from Shigella boydii serotype 4 (strain Sb227).